Here is a 264-residue protein sequence, read N- to C-terminus: 3-deoxy-manno-octulosonate cytidylyltransferase (264 aa).

Belongs to the KdsB family.

The protein resides in the cytoplasm. The catalysed reaction is 3-deoxy-alpha-D-manno-oct-2-ulosonate + CTP = CMP-3-deoxy-beta-D-manno-octulosonate + diphosphate. The protein operates within nucleotide-sugar biosynthesis; CMP-3-deoxy-D-manno-octulosonate biosynthesis; CMP-3-deoxy-D-manno-octulosonate from 3-deoxy-D-manno-octulosonate and CTP: step 1/1. It participates in bacterial outer membrane biogenesis; lipopolysaccharide biosynthesis. Activates KDO (a required 8-carbon sugar) for incorporation into bacterial lipopolysaccharide in Gram-negative bacteria. In Methylibium petroleiphilum (strain ATCC BAA-1232 / LMG 22953 / PM1), this protein is 3-deoxy-manno-octulosonate cytidylyltransferase.